The following is a 122-amino-acid chain: uncharacterized protein (122 aa).

2 consecutive transmembrane segments (helical) span residues 34-54 (IIFL…GVLV) and 91-111 (FVLA…FVSF).

Its subcellular location is the cell membrane. This is an uncharacterized protein from Mycoplasma pneumoniae (strain ATCC 29342 / M129 / Subtype 1) (Mycoplasmoides pneumoniae).